A 1040-amino-acid chain; its full sequence is FHF complex subunit HOOK-interacting protein 1A (1040 aa).

Disordered regions lie at residues 555-613 (PQQL…PIDP), 653-746 (SEDM…AAHP), and 769-808 (LMEQ…EDEE). Basic and acidic residues predominate over residues 653–664 (SEDMKDSQEEAA). The segment covering 677-690 (VPINNGPLLSTQPE) has biased composition (polar residues). Composition is skewed to basic and acidic residues over residues 696-719 (EWNR…REPE) and 783-804 (TKEE…KKEL).

The protein belongs to the FHIP family. In terms of assembly, may be a component of the FTS/Hook/FHIP complex (FHF complex), composed of AKTIP/FTS, FHIP1B, and one or more members of the Hook family of proteins HOOK1, HOOK2, and HOOK3. May interact directly with AKTIP/FTS.

Functionally, probable component of the FTS/Hook/FHIP complex (FHF complex). FHF complex promotes the distribution of AP-4 complex to the perinuclear area of the cell. This is FHF complex subunit HOOK-interacting protein 1A from Homo sapiens (Human).